A 99-amino-acid polypeptide reads, in one-letter code: Ubiquitin-related modifier 1 homolog (99 aa).

G99 is subject to 1-thioglycine. G99 is covalently cross-linked (Glycyl lysine isopeptide (Gly-Lys) (interchain with K-? in acceptor proteins)).

Belongs to the URM1 family. As to quaternary structure, interacts with cer. C-terminal thiocarboxylation occurs in 2 steps, it is first acyl-adenylated (-COAMP) via the hesA/moeB/thiF part of the MOCS3 homolog, then thiocarboxylated (-COSH) via the rhodanese domain of the MOCS3 homolog.

It is found in the cytoplasm. Its pathway is tRNA modification; 5-methoxycarbonylmethyl-2-thiouridine-tRNA biosynthesis. Acts as a sulfur carrier required for 2-thiolation of mcm(5)S(2)U at tRNA wobble positions of cytosolic tRNA(Lys), tRNA(Glu) and tRNA(Gln). Serves as sulfur donor in tRNA 2-thiolation reaction by being thiocarboxylated (-COSH) at its C-terminus by MOCS3. The sulfur is then transferred to tRNA to form 2-thiolation of mcm(5)S(2)U. Also acts as a ubiquitin-like protein (UBL) that is covalently conjugated via an isopeptide bond to lysine residues of target proteins such as Prx2/Jafrac1, Ciao1, Eip71CD and GILT1. The thiocarboxylated form serves as substrate for conjugation and oxidative stress specifically induces the formation of UBL-protein conjugates. The chain is Ubiquitin-related modifier 1 homolog from Drosophila virilis (Fruit fly).